A 99-amino-acid polypeptide reads, in one-letter code: Ubiquitin-related modifier 1 (99 aa).

The residue at position 99 (G99) is a 1-thioglycine. Residue G99 forms a Glycyl lysine isopeptide (Gly-Lys) (interchain with K-? in acceptor proteins) linkage.

The protein belongs to the URM1 family. Post-translationally, C-terminal thiocarboxylation occurs in 2 steps, it is first acyl-adenylated (-COAMP) via the hesA/moeB/thiF part of UBA4, then thiocarboxylated (-COSH) via the rhodanese domain of UBA4.

It localises to the cytoplasm. The protein operates within tRNA modification; 5-methoxycarbonylmethyl-2-thiouridine-tRNA biosynthesis. Functionally, acts as a sulfur carrier required for 2-thiolation of mcm(5)S(2)U at tRNA wobble positions of cytosolic tRNA(Lys), tRNA(Glu) and tRNA(Gln). Serves as sulfur donor in tRNA 2-thiolation reaction by being thiocarboxylated (-COSH) at its C-terminus by the MOCS3 homolog UBA4. The sulfur is then transferred to tRNA to form 2-thiolation of mcm(5)S(2)U. Prior mcm(5) tRNA modification by the elongator complex is required for 2-thiolation. Also acts as a ubiquitin-like protein (UBL) that is covalently conjugated via an isopeptide bond to lysine residues of target proteins such as AHP1. The thiocarboxylated form serves as substrate for conjugation and oxidative stress specifically induces the formation of UBL-protein conjugates. The chain is Ubiquitin-related modifier 1 from Yarrowia lipolytica (strain CLIB 122 / E 150) (Yeast).